A 583-amino-acid polypeptide reads, in one-letter code: Threonine--tRNA ligase (583 aa).

Positions 185 to 478 (DHRKLGRELN…LVEHYGGAFP (294 aa)) are catalytic. Residues Cys-278, His-329, and His-455 each coordinate Zn(2+).

It belongs to the class-II aminoacyl-tRNA synthetase family. In terms of assembly, homodimer. Zn(2+) serves as cofactor.

It is found in the cytoplasm. The catalysed reaction is tRNA(Thr) + L-threonine + ATP = L-threonyl-tRNA(Thr) + AMP + diphosphate + H(+). In terms of biological role, catalyzes the attachment of threonine to tRNA(Thr) in a two-step reaction: L-threonine is first activated by ATP to form Thr-AMP and then transferred to the acceptor end of tRNA(Thr). Also edits incorrectly charged L-seryl-tRNA(Thr). The sequence is that of Threonine--tRNA ligase from Borrelia recurrentis (strain A1).